The sequence spans 143 residues: Beta/delta-urticatoxin-Uf2a (143 aa).

A signal peptide spans 1 to 18 (MGAIVLVALMALVASSSA). A propeptide spanning residues 19–80 (FSDIEHNIMK…MMLSGRPQPN (62 aa)) is cleaved from the precursor. 6 disulfides stabilise this stretch: C83-C100, C90-C105, C99-C113, C115-C129, C122-C134, and C128-C142.

It belongs to the urticatoxin-2 family. As to expression, expressed in trichomes, that are stiff epidermal hairs located on the surface of petioles and leaves.

It is found in the secreted. Its function is as follows. Plant defense neurotoxin that causes pain and systemic symptoms in mammals via modulation of voltage-gated sodium channels (Nav). Potent modulator of human Nav1.5/SCN5A (EC(50)=55 nM), Nav1.6/SCN8A (EC(50)=0.86 nM), and Nav1.7/SCN9A (EC(50)=208 nM), where it shifts the activation threshold to more negative potentials and delays fast inactivation. Also shifts the voltage-dependence of steady-state fast inactivation of Nav1.6/SCN8A, but not that of Nav1.5/SCN5A or Nav1.7/SCN9A. On Nav1.7/SCN9A, principally acts by binding to extracellular loops of domain IV (Nav site 3). Does not affect current response of the tetrodotoxin (TTX)-resistant Nav1.8/SCN10A sodium channel. In vivo, intraplantar injection into mice causes numerous dose-dependent, immediate, and long-lasting spontaneous pain behaviors, while no swelling is observed in the injected paw. At the highest doses tested, systemic symptoms including hypokinesia and hypersalivation are observed. This is Beta/delta-urticatoxin-Uf2a from Urtica ferox (Tree nettle).